The chain runs to 262 residues: F-actin-capping protein subunit alpha (262 aa).

The protein belongs to the F-actin-capping protein alpha subunit family. Heterodimer of an alpha and a beta subunit.

Its function is as follows. F-actin-capping proteins bind in a Ca(2+)-independent manner to the fast growing ends of actin filaments (barbed end) thereby blocking the exchange of subunits at these ends. Unlike other capping proteins (such as gelsolin and severin), these proteins do not sever actin filaments. The sequence is that of F-actin-capping protein subunit alpha (CAP1) from Kluyveromyces lactis (strain ATCC 8585 / CBS 2359 / DSM 70799 / NBRC 1267 / NRRL Y-1140 / WM37) (Yeast).